The following is a 158-amino-acid chain: Cyclic pyranopterin monophosphate synthase (158 aa).

Residues 75 to 77 (LCH) and 113 to 114 (ME) each bind substrate. Residue Asp128 is part of the active site.

This sequence belongs to the MoaC family. In terms of assembly, homohexamer; trimer of dimers.

The enzyme catalyses (8S)-3',8-cyclo-7,8-dihydroguanosine 5'-triphosphate = cyclic pyranopterin phosphate + diphosphate. Its pathway is cofactor biosynthesis; molybdopterin biosynthesis. In terms of biological role, catalyzes the conversion of (8S)-3',8-cyclo-7,8-dihydroguanosine 5'-triphosphate to cyclic pyranopterin monophosphate (cPMP). The protein is Cyclic pyranopterin monophosphate synthase of Mannheimia succiniciproducens (strain KCTC 0769BP / MBEL55E).